Consider the following 401-residue polypeptide: Acetate kinase (401 aa).

Asn7 is a Mg(2+) binding site. Lys14 provides a ligand contact to ATP. Residue Arg92 participates in substrate binding. Asp149 (proton donor/acceptor) is an active-site residue. Residues 209–213 (HLGNG), 283–285 (DAR), and 331–335 (GLGEN) contribute to the ATP site. Glu385 lines the Mg(2+) pocket.

The protein belongs to the acetokinase family. Homodimer. Mg(2+) serves as cofactor. Mn(2+) is required as a cofactor.

It is found in the cytoplasm. The catalysed reaction is acetate + ATP = acetyl phosphate + ADP. It participates in metabolic intermediate biosynthesis; acetyl-CoA biosynthesis; acetyl-CoA from acetate: step 1/2. In terms of biological role, catalyzes the formation of acetyl phosphate from acetate and ATP. Can also catalyze the reverse reaction. The polypeptide is Acetate kinase (Helicobacter pylori (strain Shi470)).